Here is a 743-residue protein sequence, read N- to C-terminus: MSERQGGQEQRTEADGMTTEGISETSQTLQALANGLPADAFAVLGPKPLAEGRRQVRVLAPGAEAMGLIDPRGKLLARMQASAIDGVFEGILAADGPYRLRIVWPDRVQEVEDPYAFAATLDESLLLQIAAGDGQAVRRALGAQHVHCGDVPGVRFAVWAPHAQRVAVVGDFNGWDVRRHPMRQRIGGFWELFLPRVEAGARYKYAVTAADGRVLLKADPVARQTELPPATASVVPSAAAFAWTDAAWMANRDPGAVPAPLSIYEVHAASWRRDGHNQPLDWPTLAEQLIPYVQQLGFTHIELLPITEHPFGGSWGYQPLGLYAPTARHGSPDGFAQFVDACHRAGIGVILDWVSAHFPDDAHGLAQFDGAALYEHADPREGMHRDWNTLIYNYGRPEVTAYLLGSALEWIEHYHLDGLRVDAVASMLYRDYGRAEGEWVPNAHGGRENLEAVAFLRQLNREIATQFPGVLTIAEESTAWPGVTAAISDGGLGFTHKWNMGWMHDTLGYMQRDPAERAQHHSQLTFGLVYAFDERFVLPLSHDEVVHGTGGLLGQMPGDDWRRFANLRAYLALMWAHPGDKLLFMGAEFGQWADWNHDQSLDWHLLDGARHRGMQQLVGDLNAALRRTPALYRGSHRADGFDWSVADDARNSVLAFVRHDPAGGAPLLAVSNLTPQPHHDYHVGVPRAGLWREILNTDSAHYGGSNLGNSGRLATEPVGMHGHAQRLRLTLPPLATIYLQAEK.

Positions 1-23 (MSERQGGQEQRTEADGMTTEGIS) are disordered. D422 functions as the Nucleophile in the catalytic mechanism. E475 (proton donor) is an active-site residue.

It belongs to the glycosyl hydrolase 13 family. GlgB subfamily. As to quaternary structure, monomer.

The catalysed reaction is Transfers a segment of a (1-&gt;4)-alpha-D-glucan chain to a primary hydroxy group in a similar glucan chain.. It functions in the pathway glycan biosynthesis; glycogen biosynthesis. Catalyzes the formation of the alpha-1,6-glucosidic linkages in glycogen by scission of a 1,4-alpha-linked oligosaccharide from growing alpha-1,4-glucan chains and the subsequent attachment of the oligosaccharide to the alpha-1,6 position. In Xanthomonas euvesicatoria pv. vesicatoria (strain 85-10) (Xanthomonas campestris pv. vesicatoria), this protein is 1,4-alpha-glucan branching enzyme GlgB 2.